Here is a 448-residue protein sequence, read N- to C-terminus: Deoxyguanosinetriphosphate triphosphohydrolase-like protein (448 aa).

Residues 67-260 (RLTHSLEVSQ…MELADDIAYG (194 aa)) enclose the HD domain.

Belongs to the dGTPase family. Type 2 subfamily.

In Aliivibrio fischeri (strain MJ11) (Vibrio fischeri), this protein is Deoxyguanosinetriphosphate triphosphohydrolase-like protein.